A 503-amino-acid polypeptide reads, in one-letter code: 2-isopropylmalate synthase (503 aa).

The Pyruvate carboxyltransferase domain occupies 4–264 (LYIFDTTLRD…EVSIKTEEIY (261 aa)). Residues Asp-13, His-201, His-203, and Asn-237 each contribute to the Mn(2+) site. Positions 388–503 (KLRHLQVVSG…NQLVMLKGKD (116 aa)) are regulatory domain.

This sequence belongs to the alpha-IPM synthase/homocitrate synthase family. LeuA type 1 subfamily. In terms of assembly, homodimer. It depends on Mn(2+) as a cofactor.

It is found in the cytoplasm. The catalysed reaction is 3-methyl-2-oxobutanoate + acetyl-CoA + H2O = (2S)-2-isopropylmalate + CoA + H(+). It participates in amino-acid biosynthesis; L-leucine biosynthesis; L-leucine from 3-methyl-2-oxobutanoate: step 1/4. Functionally, catalyzes the condensation of the acetyl group of acetyl-CoA with 3-methyl-2-oxobutanoate (2-ketoisovalerate) to form 3-carboxy-3-hydroxy-4-methylpentanoate (2-isopropylmalate). The chain is 2-isopropylmalate synthase from Dictyoglomus turgidum (strain DSM 6724 / Z-1310).